Here is a 160-residue protein sequence, read N- to C-terminus: Baculoviral IAP repeat-containing protein 5.1-A (160 aa).

One copy of the BIR repeat lies at 27-97 (RLATFADWPF…KRSANCGFLS (71 aa)). Threonine 43 bears the Phosphothreonine; by CDK1 mark. Residues cysteine 66, cysteine 69, histidine 86, and cysteine 93 each coordinate Zn(2+).

Belongs to the IAP family. As to quaternary structure, component of the CPC at least composed of survivin/birc5, incenp, cdca8/borealin and/or cdca9/dasra-A, and aurkb/aurora-B. Interacts directly with incenp (via N-terminus), and may weakly interact with aurkb (via N-terminus) to stabilize the complex. Interacts with GTP-bound ran in both the S and M phases of the cell cycle. Also found in a complex with ubiquitin-mediated signaling proteins including at least usp9x/xFAM, nploc4/npl4 and ufd1. Ubiquitination is required for centrosome-targeting.

The protein localises to the cytoplasm. The protein resides in the nucleus. Its subcellular location is the chromosome. It is found in the centromere. It localises to the cytoskeleton. The protein localises to the spindle. Its function is as follows. Component of the chromosomal passenger complex (CPC), a complex that acts as a key regulator of mitosis. The CPC complex has essential functions at the centromere in ensuring correct chromosome alignment and segregation and is required for chromatin-induced microtubule stabilization and spindle assembly. Stimulates the mitotic kinase activity of aurkb/aurora-B in the CPC. Does not appear to exhibit anti-apoptotic activity. The sequence is that of Baculoviral IAP repeat-containing protein 5.1-A (birc5.1-a) from Xenopus laevis (African clawed frog).